Reading from the N-terminus, the 468-residue chain is Glutamine synthetase (468 aa).

Positions 11 to 96 constitute a GS beta-grasp domain; sequence HDVKWIDLRF…LVCDIIEPST (86 aa). In terms of domain architecture, GS catalytic spans 104–468; it reads PRAIAHRAEE…PLEYELYYSC (365 aa). Residues glutamate 129 and glutamate 131 each contribute to the Mg(2+) site. ATP is bound at residue glutamate 207. Mg(2+)-binding residues include glutamate 212 and glutamate 220. Residues 264 to 265 and glycine 265 each bind L-glutamate; that span reads NG. Histidine 269 serves as a coordination point for Mg(2+). ATP-binding positions include 271–273 and serine 273; that span reads HMS. L-glutamate contacts are provided by arginine 321, glutamate 327, and arginine 339. Positions 339, 344, and 352 each coordinate ATP. Glutamate 357 provides a ligand contact to Mg(2+). Arginine 359 is an L-glutamate binding site. Residue tyrosine 397 is modified to O-AMP-tyrosine.

The protein belongs to the glutamine synthetase family. In terms of assembly, oligomer of 12 subunits arranged in the form of two hexagons. Requires Mg(2+) as cofactor. The cofactor is Mn(2+).

The enzyme catalyses L-glutamate + NH4(+) + ATP = L-glutamine + ADP + phosphate + H(+). When cellular nitrogen levels are high, the C-terminal adenylyl transferase (AT) of GlnE inhibits GlnA by covalent transfer of an adenylyl group from ATP to Tyr-397. Conversely, when nitrogen levels are low, the N-terminal adenylyl removase (AR) of GlnE activates GlnA by removing the adenylyl group by phosphorolysis. The fully adenylated enzyme complex is inactive. Functionally, catalyzes the formation of glutamine from glutamate and ammonia. In vitro, can also use hydroxylamine, methylamine and ethylamine, with 32%, 7% and 1% activity compared to ammonia, respectively. The chain is Glutamine synthetase from Pseudomonas taetrolens.